We begin with the raw amino-acid sequence, 938 residues long: Glutamate receptor ionotropic, NMDA 1 (938 aa).

The signal sequence occupies residues 1–18 (MSTMHLLTFALLFSCSFA). Residues 19–559 (RAACDPKIVN…TLDSFMQPFQ (541 aa)) lie on the Extracellular side of the membrane. Residues Asn61, Asn203, Asn239, Asn276, Asn300, Asn350, Asn368, Asn440, Asn471, and Asn491 are each glycosylated (N-linked (GlcNAc...) asparagine). An intrachain disulfide couples Cys79 to Cys308. Disulfide bonds link Cys420–Cys454 and Cys436–Cys455. Glycine contacts are provided by Pro516, Thr518, and Arg523. A helical transmembrane segment spans residues 560-580 (STLWLLVGLSVHVVAVMLYLL). Residues 581–602 (DRFSPFGRFKVNSEEEEEDALT) lie on the Cytoplasmic side of the membrane. The discontinuously helical intramembrane region spans 603 to 624 (LSSAMWFSWGVLLNSGIGEGAP). Residues 603–624 (LSSAMWFSWGVLLNSGIGEGAP) are pore-forming. The Cytoplasmic portion of the chain corresponds to 625–630 (RSFSAR). Residues 631–647 (ILGMVWAGFAMIIVASY) form a helical membrane-spanning segment. Residues 648-812 (TANLAAFLVL…NAPATLTFEN (165 aa)) are Extracellular-facing. The N-linked (GlcNAc...) asparagine glycan is linked to Asn674. The glycine site is built by Ser688 and Asp732. A disulfide bridge connects residues Cys744 and Cys798. Asn771 carries an N-linked (GlcNAc...) asparagine glycan. A helical transmembrane segment spans residues 813–833 (MAGVFMLVAGGIVAGIFLIFI). Over 834-938 (EIAYKRHKDA…LQLCSRHRES (105 aa)) the chain is Cytoplasmic. Lys877 is subject to Phosphoserine. Residues Ser889, Ser890, Ser896, and Ser897 each carry the phosphoserine; by PKC modification. Positions 889 to 938 (SSFKRRRSSKDTSTGGGRGALQNQKDTVLPRRAIEREEGQLQLCSRHRES) are disordered. Residue Lys898 is modified to Phosphoserine. Over residues 916-927 (VLPRRAIEREEG) the composition is skewed to basic and acidic residues.

Belongs to the glutamate-gated ion channel (TC 1.A.10.1) family. NR1/GRIN1 subfamily. Heterotetramer; the NMDAR subunits are modular and harbor tiered domains that function in concert to regulate opening and closing of the cation-selective ion channel pore. Forms heterotetrameric channels composed of two GluN1/zeta subunits (GRIN1), and two identical GluN2/epsilon subunits (GRIN2A, GRIN2B, GRIN2C or GRIN2D) or GluN3 subunits (GRIN3A or GRIN3B) (in vitro). Can also form heterotetrameric channels that contain at least two GluN1 subunits and at least two different GluN2 subunits (or a combination of one GluN2 and one GluN3 subunits) (in vitro). In vivo, the subunit composition may vary in function of the expression levels of the different subunits. Found in a complex with GRIN2A or GRIN2B, GRIN3A and PPP2CB. Found in a complex with GRIN2A or GRIN2B and GRIN3B;. Interacts with SNX27 (via PDZ domain); the interaction is required for recycling to the plasma membrane when endocytosed and prevent degradation in lysosomes. Interacts with DLG4 and MPDZ. Interacts with LRFN1 and LRFN2. Interacts with MYZAP. Found in a complex with DLG4 and PRR7. Found in a complex with GRIN2B and PRR7. Interacts with PRR7; the interaction is reduced following NMDA receptor activity. Post-translationally, NMDA is probably regulated by C-terminal phosphorylation of an isoform of NR1 by PKC. Dephosphorylated on Ser-897 probably by protein phosphatase 2A (PPP2CB). Its phosphorylated state is influenced by the formation of the NMDAR-PPP2CB complex and the NMDAR channel activity. Detected throughout the brain, in brain cortex, cerebellum, thalamus and olfactory bulb.

The protein resides in the cell membrane. It localises to the postsynaptic cell membrane. It is found in the synaptic cell membrane. The protein localises to the postsynaptic density membrane. It catalyses the reaction Ca(2+)(in) = Ca(2+)(out). The catalysed reaction is Na(+)(in) = Na(+)(out). It carries out the reaction K(+)(in) = K(+)(out). Its activity is regulated as follows. NMDA glutamate receptor activity is potentiated by Zn2(+) in a dose-dependent fashion. The potentiating effect of Zn2(+) is at submicromolar concentrations and its inhibitory action is at high micromolar to millimolar concentrations. Excitatory glycine receptors are inhibited by D-serine at 100uM. Functionally, component of N-methyl-D-aspartate (NMDA) receptors (NMDARs) that function as heterotetrameric, ligand-gated cation channels with high calcium permeability and voltage-dependent block by Mg(2+). NMDARs participate in synaptic plasticity for learning and memory formation by contributing to the long-term potentiation (LTP). Channel activation requires binding of the neurotransmitter L-glutamate to the GluN2 subunit, glycine or D-serine binding to the GluN1 subunit, plus membrane depolarization to eliminate channel inhibition by Mg(2+). NMDARs mediate simultaneously the potasium efflux and the influx of calcium and sodium. Each GluN2 or GluN3 subunit confers differential attributes to channel properties, including activation, deactivation and desensitization kinetics, pH sensitivity, Ca2(+) permeability, and binding to allosteric modulators. Forms excitatory glycinergic receptor complexes with GluN3 alone which are activated by glycine binding to the GluN1 and GluN3 subunits. In Rattus norvegicus (Rat), this protein is Glutamate receptor ionotropic, NMDA 1.